Here is a 185-residue protein sequence, read N- to C-terminus: Elongation factor P (185 aa).

This sequence belongs to the elongation factor P family.

Its subcellular location is the cytoplasm. The protein operates within protein biosynthesis; polypeptide chain elongation. In terms of biological role, involved in peptide bond synthesis. Stimulates efficient translation and peptide-bond synthesis on native or reconstituted 70S ribosomes in vitro. Probably functions indirectly by altering the affinity of the ribosome for aminoacyl-tRNA, thus increasing their reactivity as acceptors for peptidyl transferase. The protein is Elongation factor P of Dechloromonas aromatica (strain RCB).